The following is a 251-amino-acid chain: MEASANEPAMKSLKSNPSGPIPNFFVSLSSAFTQTPLVRSNKPNLLLLPPVADSVKLIQDFHQSLISATEKFKGFLHSLASKNPLFQEAVRLSSEFHILCDEIRLRNTTRVRFAMSNHGFAAVLPGDSVAGLVVANGLINFLNIYNTILVVRLVLTWFPSAPPAIVNPLSTLCDPYLNIFRGFIPPLGGLDLSPILAFLVLNAFTSSAMALPCELPSADGAVSPASSETKWVRRRRLSSHKDHRPSSASMT.

Residues 1-51 constitute a chloroplast transit peptide; it reads MEASANEPAMKSLKSNPSGPIPNFFVSLSSAFTQTPLVRSNKPNLLLLPPV. Helical transmembrane passes span 119–139 and 183–203; these read GFAA…NGLI and FIPP…VLNA. The span at 232-243 shows a compositional bias: basic residues; the sequence is VRRRRLSSHKDH. The interval 232–251 is disordered; that stretch reads VRRRRLSSHKDHRPSSASMT.

The protein belongs to the YggT family.

It localises to the plastid. It is found in the chloroplast thylakoid membrane. In terms of biological role, not required for the biogenesis and accumulation of native cytochrome b6 in the thylakoid membrane. Not functionally involved in the pathway for covalent binding of the c-type heme to cytochrome b6. The sequence is that of YlmG homolog protein 2, chloroplastic from Arabidopsis thaliana (Mouse-ear cress).